We begin with the raw amino-acid sequence, 383 residues long: Succinyl-diaminopimelate desuccinylase (383 aa).

Position 73 (H73) interacts with Zn(2+). D75 is an active-site residue. D107 serves as a coordination point for Zn(2+). The Proton acceptor role is filled by E141. Residues E142, E170, and H356 each contribute to the Zn(2+) site.

Belongs to the peptidase M20A family. DapE subfamily. As to quaternary structure, homodimer. Zn(2+) is required as a cofactor. The cofactor is Co(2+).

The enzyme catalyses N-succinyl-(2S,6S)-2,6-diaminopimelate + H2O = (2S,6S)-2,6-diaminopimelate + succinate. The protein operates within amino-acid biosynthesis; L-lysine biosynthesis via DAP pathway; LL-2,6-diaminopimelate from (S)-tetrahydrodipicolinate (succinylase route): step 3/3. Its function is as follows. Catalyzes the hydrolysis of N-succinyl-L,L-diaminopimelic acid (SDAP), forming succinate and LL-2,6-diaminopimelate (DAP), an intermediate involved in the bacterial biosynthesis of lysine and meso-diaminopimelic acid, an essential component of bacterial cell walls. The polypeptide is Succinyl-diaminopimelate desuccinylase (Pseudomonas aeruginosa (strain UCBPP-PA14)).